Here is a 345-residue protein sequence, read N- to C-terminus: Phosphoribosylformylglycinamidine cyclo-ligase (345 aa).

It belongs to the AIR synthase family.

The protein localises to the cytoplasm. It catalyses the reaction 2-formamido-N(1)-(5-O-phospho-beta-D-ribosyl)acetamidine + ATP = 5-amino-1-(5-phospho-beta-D-ribosyl)imidazole + ADP + phosphate + H(+). It participates in purine metabolism; IMP biosynthesis via de novo pathway; 5-amino-1-(5-phospho-D-ribosyl)imidazole from N(2)-formyl-N(1)-(5-phospho-D-ribosyl)glycinamide: step 2/2. The protein is Phosphoribosylformylglycinamidine cyclo-ligase of Histophilus somni (strain 129Pt) (Haemophilus somnus).